A 418-amino-acid chain; its full sequence is Vacuole membrane protein HFL1 (418 aa).

Topologically, residues Met-1 to Leu-5 are extracellular. A helical transmembrane segment spans residues Leu-6–Phe-26. Over Tyr-27–Arg-43 the chain is Cytoplasmic. The chain crosses the membrane as a helical span at residues Leu-44–Ile-64. The Extracellular segment spans residues Lys-65–Glu-78. A helical membrane pass occupies residues Phe-79 to Glu-99. Residues Arg-100 to Gly-141 are Cytoplasmic-facing. Residues Ile-142–Trp-162 form a helical membrane-spanning segment. Residues Lys-163–Glu-168 lie on the Extracellular side of the membrane. A helical membrane pass occupies residues Ile-169–Phe-189. At Trp-190–Lys-205 the chain is on the cytoplasmic side. The chain crosses the membrane as a helical span at residues Phe-206–Leu-226. Over Val-227–Lys-246 the chain is Extracellular. Residues Asn-247 to Trp-267 form a helical membrane-spanning segment. Over Asn-268–Cys-418 the chain is Cytoplasmic. Positions Arg-379–Ser-402 are ATG8-interacting region.

This sequence belongs to the TMEM184 family. As to quaternary structure, interacts with ATG8.

It is found in the vacuole membrane. Functionally, vacuole membrane protein that recruits ATG8 to facilitate the degradation of vacuolar integral membrane proteins during early-stationary vacuole turnover (EVT) when cells enter stationary phase. In Saccharomyces cerevisiae (strain ATCC 204508 / S288c) (Baker's yeast), this protein is Vacuole membrane protein HFL1.